The primary structure comprises 333 residues: EP300-interacting inhibitor of differentiation 3 (333 aa).

It belongs to the NSE4 family. In terms of assembly, component of the SMC5-SMC6 complex which consists at least of SMC5, SMC6, NSMCE2, NSMCE1, NSMCE4A or EID3 and NSMCE3; EID3 seems to be a testis-specific subunit. NSMCE1, NSMCE4A or EID3 and NSMCE3 probably form a subcomplex that bridges the head domains of the SMC5:SMC6 heterodimer. Homodimer, and heterodimer with EID2. Interacts with the C-terminal region of CREBBP. As to expression, highly expressed in testis.

The protein resides in the nucleus. It is found in the cytoplasm. The protein localises to the chromosome. It localises to the telomere. Its function is as follows. Tissue-specific component of the SMC5-SMC6 complex, a complex involved in repair of DNA double-strand breaks by homologous recombination. The complex may promote sister chromatid homologous recombination by recruiting the SMC1-SMC3 cohesin complex to double-strand breaks. The complex is required for telomere maintenance via recombination and mediates sumoylation of shelterin complex (telosome) components. Functionally, acts as a repressor of nuclear receptor-dependent transcription possibly by interfering with CREBBP-dependent coactivation. May function as a coinhibitor of other CREBBP/EP300-dependent transcription factors. This chain is EP300-interacting inhibitor of differentiation 3, found in Homo sapiens (Human).